Reading from the N-terminus, the 632-residue chain is Threonine--tRNA ligase (632 aa).

Residues 1-59 (MIRITFLAKQKVEEYSSRVTGFDILQPDISKEAIALRVNGELYDLSREIESDTEIDVIQ) enclose the TGS domain. The tract at residues 240–532 (DHRRIAKDMD…LIEHYAGKFP (293 aa)) is catalytic. 3 residues coordinate Zn(2+): Cys-332, His-383, and His-509.

Belongs to the class-II aminoacyl-tRNA synthetase family. In terms of assembly, homodimer. Zn(2+) is required as a cofactor.

Its subcellular location is the cytoplasm. The enzyme catalyses tRNA(Thr) + L-threonine + ATP = L-threonyl-tRNA(Thr) + AMP + diphosphate + H(+). In terms of biological role, catalyzes the attachment of threonine to tRNA(Thr) in a two-step reaction: L-threonine is first activated by ATP to form Thr-AMP and then transferred to the acceptor end of tRNA(Thr). Also edits incorrectly charged L-seryl-tRNA(Thr). This is Threonine--tRNA ligase from Wolbachia sp. subsp. Brugia malayi (strain TRS).